Reading from the N-terminus, the 188-residue chain is FMN-dependent NADPH-azoreductase (188 aa).

This sequence belongs to the azoreductase type 2 family. As to quaternary structure, homotetramer. Requires FMN as cofactor.

Its function is as follows. Catalyzes the reductive cleavage of azo bond in aromatic azo compounds to the corresponding amines. Requires NADPH, but not NADH, as an electron donor for its activity. This is FMN-dependent NADPH-azoreductase (azo1) from Staphylococcus saprophyticus subsp. saprophyticus (strain ATCC 15305 / DSM 20229 / NCIMB 8711 / NCTC 7292 / S-41).